Here is a 556-residue protein sequence, read N- to C-terminus: Formate--tetrahydrofolate ligase (556 aa).

Residue 65 to 72 (TPAGEGKS) participates in ATP binding.

The protein belongs to the formate--tetrahydrofolate ligase family.

The catalysed reaction is (6S)-5,6,7,8-tetrahydrofolate + formate + ATP = (6R)-10-formyltetrahydrofolate + ADP + phosphate. It functions in the pathway one-carbon metabolism; tetrahydrofolate interconversion. The protein is Formate--tetrahydrofolate ligase of Streptococcus agalactiae serotype Ia (strain ATCC 27591 / A909 / CDC SS700).